A 148-amino-acid chain; its full sequence is Ubiquitin-conjugating enzyme E2 28 (148 aa).

The UBC core domain occupies 1–147; sequence MASKRILKEL…ARSWTQKYAM (147 aa). The active-site Glycyl thioester intermediate is the cysteine 85.

Belongs to the ubiquitin-conjugating enzyme family. In terms of assembly, interacts with SINAT5. In terms of tissue distribution, expressed in seeds, pistils, siliques, hypocotyls and leaves.

It carries out the reaction S-ubiquitinyl-[E1 ubiquitin-activating enzyme]-L-cysteine + [E2 ubiquitin-conjugating enzyme]-L-cysteine = [E1 ubiquitin-activating enzyme]-L-cysteine + S-ubiquitinyl-[E2 ubiquitin-conjugating enzyme]-L-cysteine.. Its pathway is protein modification; protein ubiquitination. Accepts the ubiquitin from the E1 complex and catalyzes its covalent attachment to other proteins. The chain is Ubiquitin-conjugating enzyme E2 28 from Arabidopsis thaliana (Mouse-ear cress).